A 354-amino-acid polypeptide reads, in one-letter code: FAD synthetase 1, chloroplastic (354 aa).

A chloroplast-targeting transit peptide spans 1–75 (MLCGGSRASV…SQGDDHPELS (75 aa)). The disordered stretch occupies residues 228–248 (SVNTEEEDSKSKERGQVSSTR).

Requires Mg(2+) as cofactor.

The protein localises to the plastid. Its subcellular location is the chloroplast. It carries out the reaction FMN + ATP + H(+) = FAD + diphosphate. It functions in the pathway cofactor biosynthesis; FAD biosynthesis; FAD from FMN: step 1/1. Functionally, catalyzes the adenylation of flavin mononucleotide (FMN) to form flavin adenine dinucleotide (FAD) coenzyme. The sequence is that of FAD synthetase 1, chloroplastic from Arabidopsis thaliana (Mouse-ear cress).